The primary structure comprises 88 residues: Large ribosomal subunit protein bL27 (88 aa).

Residues 1-24 (MAHKKAGGSSRNGRDSAGQRRGVK) are disordered.

Belongs to the bacterial ribosomal protein bL27 family.

The chain is Large ribosomal subunit protein bL27 from Syntrophobacter fumaroxidans (strain DSM 10017 / MPOB).